Consider the following 454-residue polypeptide: MAHDILIVDDEPDISGLVAGILEDEGYSARTARDADGALAEIAARRPNLIFLDIWLQGSRLDGLELLDIIKREHPEVPVVMISGHGNIETAVAAIKRGAYDFIEKPFNADRLVVITERALETLRLRREVRELKQLTQPHTMVGRSSVIQQLRATVDRVGPTNSRILIVGPSGSGKELTARMIHAASARAQGPFVVINAAAITPERLEYELFGVEEGEGRERHRGALEEAHGGTLFLDEIADMPRETQNRVLRVLVEQTFSRIGSSEKVRVDVRIISSTGRHLEEEIAAGRFREDLYHRLSVVPIRVPPLAERREDIPDLVDFFIDLISQTTGLQRRKVGEDAMAVLQSHDWPGNVRQLRNNVERLLILAGGDPDAEVTASMLPPDVGALVPTLPNGNGGEHLMGLPLREAREVFEREYLAAQINRFGGNISRTAEFVGMERSALHRKLKALGVG.

The Response regulatory domain occupies 4 to 120 (DILIVDDEPD…RLVVITERAL (117 aa)). Asp-53 bears the 4-aspartylphosphate mark. One can recognise a Sigma-54 factor interaction domain in the interval 141–367 (MVGRSSVIQQ…LRNNVERLLI (227 aa)). ATP is bound by residues 169–176 (GPSGSGKE) and 229–238 (AHGGTLFLDE). A DNA-binding region (H-T-H motif) is located at residues 430–449 (ISRTAEFVGMERSALHRKLK).

In terms of biological role, member of the two-component regulatory system NtrY/NtrX involved in the activation of nitrogen assimilatory genes such as GlnA. NtrX is probably phosphorylated by NtrY and interacts with sigma-54. The polypeptide is Nitrogen assimilation regulatory protein NtrX (ntrX) (Azorhizobium caulinodans (strain ATCC 43989 / DSM 5975 / JCM 20966 / LMG 6465 / NBRC 14845 / NCIMB 13405 / ORS 571)).